Reading from the N-terminus, the 251-residue chain is uncharacterized protein (251 aa).

An NADP(+)-binding site is contributed by 14-37 (VLGGTSAIGLATARRLIARGARLV). Ser-145 contributes to the substrate binding site. Tyr-158 acts as the Proton acceptor in catalysis.

This sequence belongs to the short-chain dehydrogenases/reductases (SDR) family.

Its function is as follows. May be involved in the biosynthesis of a heptaene-type antibiotic. This is an uncharacterized protein from Streptomyces coelicolor.